Consider the following 250-residue polypeptide: 2,3-bisphosphoglycerate-dependent phosphoglycerate mutase (250 aa).

Substrate contacts are provided by residues 10 to 17 (RHGESQWN), 23 to 24 (TG), Arg62, 89 to 92 (ERHY), Lys100, 116 to 117 (RR), and 185 to 186 (GN). His11 acts as the Tele-phosphohistidine intermediate in catalysis. The active-site Proton donor/acceptor is the Glu89.

Belongs to the phosphoglycerate mutase family. BPG-dependent PGAM subfamily. As to quaternary structure, homodimer.

The catalysed reaction is (2R)-2-phosphoglycerate = (2R)-3-phosphoglycerate. The protein operates within carbohydrate degradation; glycolysis; pyruvate from D-glyceraldehyde 3-phosphate: step 3/5. Catalyzes the interconversion of 2-phosphoglycerate and 3-phosphoglycerate. The chain is 2,3-bisphosphoglycerate-dependent phosphoglycerate mutase from Salmonella agona (strain SL483).